A 456-amino-acid chain; its full sequence is Yersinopine synthase (456 aa).

Residues 12–15, 35–40, and Thr154 each bind NADP(+); these read AGPA and NRPSTK. Catalysis depends on His242, which acts as the Proton donor/acceptor.

Belongs to the staphylopine dehydrogenase family. Homodimer.

The catalysed reaction is yersinopine + NADP(+) + H2O = (2S)-2-amino-4-{[(1S)-1-carboxy-2-(1H-imidazol-4-yl)ethyl]amino}butanoate + pyruvate + NADPH + H(+). In terms of biological role, catalyzes the NADPH-dependent reductive condensation of pyruvate to the intermediate formed by the adjacently encoded enzyme y2836, namely (2S)-2-amino-4-{[(1S)-1-carboxy-2-(1H-imidazol-4-yl)ethyl]amino}butanoate, leading to the production of yersinopine. This is the last step in the biosynthesis of the metallophore yersinopine, which is involved in metal acquisition and thus enables bacterial growth inside the host, where metal access is limited. Therefore, this enzyme probably contributes to Yersinia virulence. Cannot use alpha-ketoglutarate in place of pyruvate, and displays only poor efficiency with oxaloacetate and glyoxylate. The sequence is that of Yersinopine synthase from Yersinia pestis.